A 140-amino-acid polypeptide reads, in one-letter code: Mitochondrial import receptor subunit TOM22 homolog (140 aa).

Low complexity predominate over residues Met1–Pro11. The segment at Met1–Glu40 is disordered. At Met1–Ala81 the chain is on the cytoplasmic side. Residue Ser13 is modified to Phosphoserine. Residues Lys25–Glu40 are compositionally biased toward acidic residues. The interval Asp39–Gly48 is import sequence; necessary for mitochondrion outer membrane localization and integration in the TOM complex. At Thr41 the chain carries Phosphothreonine. Ser43 is subject to Phosphoserine. The segment at Ala81–Thr101 is TMD; necessary for mitochondrion outer membrane localization and integration in the TOM complex. Residues Ala82–Thr101 form a helical membrane-spanning segment. At Glu102–Ile140 the chain is on the mitochondrial intermembrane side. The tract at residues Pro121–Ile140 is C-tail signal; necessary for mitochondrion outer membrane localization and integration in the TOM complex.

It belongs to the Tom22 family. Forms part of the preprotein translocase complex of the outer mitochondrial membrane (TOM complex) which consists of at least 7 different proteins (TOMM5, TOMM6, TOMM7, TOMM20, TOMM22, TOMM40 and TOMM70). Interacts with PPP2R2B and TOMM40.

The protein localises to the mitochondrion outer membrane. In terms of biological role, central receptor component of the translocase of the outer membrane of mitochondria (TOM complex) responsible for the recognition and translocation of cytosolically synthesized mitochondrial preproteins. Together with the peripheral receptor TOM20 functions as the transit peptide receptor and facilitates the movement of preproteins into the translocation pore. Required for the translocation across the mitochondrial outer membrane of cytochrome P450 monooxygenases. In Bos taurus (Bovine), this protein is Mitochondrial import receptor subunit TOM22 homolog (TOMM22).